Consider the following 256-residue polypeptide: Calsenilin (256 aa).

Positions 1–22 are disordered; it reads MQRTKEAMKASDGSLLGDPGRI. A Phosphoserine modification is found at Ser-14. Residue Lys-26 forms a Glycyl lysine isopeptide (Lys-Gly) (interchain with G-Cter in SUMO1) linkage. Residues Cys-45 and Cys-46 are each lipidated (S-palmitoyl cysteine). Phosphoserine occurs at positions 60 and 63. The EF-hand 1; degenerate domain occupies 67–123; sequence LELSTVRHQPEGLDQLQAQTKFTKKELQSLYRGFKNECPTGLVDEDTFKLIYSQFFP. A Glycyl lysine isopeptide (Lys-Gly) (interchain with G-Cter in SUMO1) cross-link involves residue Lys-90. EF-hand domains lie at 126 to 161, 162 to 197, and 210 to 245; these read DATTYAHFLFNAFDADGNGAIHFEDFVVGLSILLRG, TVHEKLKWAFNLYDINKDGYITKEEMLAIMKSIYDM, and APLEHVERFFQKMDRNQDGVVTIDEFLETCQKDENI. Residues Asp-175, Asn-177, Asp-179, Tyr-181, Glu-186, Asp-223, Asn-225, Asp-227, and Glu-234 each contribute to the Ca(2+) site. The interaction with KCND2 stretch occupies residues 243–256; it reads ENIMSSMQLFENVI.

Belongs to the recoverin family. In terms of assembly, binds to DNA as a homomultimer. Dimerization is induced by binding to calcium. Interacts with the C-terminus of PSEN1 and PSEN2 and with PSEN2 CTF subunit. Associates with KCN1. Component of heteromultimeric potassium channels. Identified in potassium channel complexes containing KCND1, KCND2, KCND3, KCNIP1, KCNIP2, KCNIP3, KCNIP4, DPP6 and DPP10. Interacts with KCND2 and KCND3. Post-translationally, palmitoylated. Palmitoylation enhances association with the plasma membrane. In terms of processing, proteolytically cleaved by caspase-3. As to expression, detected in brain cortex, thalamus, dentate gyrus and cerebellum (at protein level). Expressed in brain. Colocalizes with KCND2 in excitatory neurons including cortical and hippocampal CA1 pyramidal cells.

It localises to the cytoplasm. It is found in the cell membrane. The protein resides in the endoplasmic reticulum. Its subcellular location is the golgi apparatus. The protein localises to the nucleus. Functionally, calcium-dependent transcriptional repressor that binds to the DRE element of genes including PDYN and FOS. Affinity for DNA is reduced upon binding to calcium and enhanced by binding to magnesium. Seems to be involved in nociception. Regulatory subunit of Kv4/D (Shal)-type voltage-gated rapidly inactivating A-type potassium channels, such as KCND2/Kv4.2 and KCND3/Kv4.3. Modulates channel expression at the cell membrane, gating characteristics, inactivation kinetics and rate of recovery from inactivation in a calcium-dependent and isoform-specific manner. In terms of biological role, may play a role in the regulation of PSEN2 proteolytic processing and apoptosis. Together with PSEN2 involved in modulation of amyloid-beta formation. The polypeptide is Calsenilin (Kcnip3) (Rattus norvegicus (Rat)).